We begin with the raw amino-acid sequence, 288 residues long: Co-chaperone protein DjlA (288 aa).

Residues 1-6 (MEFIGK) are Periplasmic-facing. A helical transmembrane segment spans residues 7–30 (IIGVFLGWKVGGFFGAIAGLILGS). Topologically, residues 31 to 288 (IADKKLYELG…DLICKAKGWK (258 aa)) are cytoplasmic. The 67-residue stretch at 222-288 (DAYKVLGVTE…DLICKAKGWK (67 aa)) folds into the J domain.

As to quaternary structure, homodimer.

It is found in the cell inner membrane. In terms of biological role, regulatory DnaK co-chaperone. Direct interaction between DnaK and DjlA is needed for the induction of the wcaABCDE operon, involved in the synthesis of a colanic acid polysaccharide capsule, possibly through activation of the RcsB/RcsC phosphotransfer signaling pathway. The colanic acid capsule may help the bacterium survive conditions outside the host. The sequence is that of Co-chaperone protein DjlA from Haemophilus influenzae (strain ATCC 51907 / DSM 11121 / KW20 / Rd).